A 560-amino-acid chain; its full sequence is Dihydroxy-acid dehydratase (560 aa).

A Mg(2+)-binding site is contributed by Asp-80. Residue Cys-121 participates in [2Fe-2S] cluster binding. Asp-122 and Lys-123 together coordinate Mg(2+). Position 123 is an N6-carboxylysine (Lys-123). Cys-194 provides a ligand contact to [2Fe-2S] cluster. Glu-447 provides a ligand contact to Mg(2+). Residue Ser-473 is the Proton acceptor of the active site.

The protein belongs to the IlvD/Edd family. Homodimer. The cofactor is [2Fe-2S] cluster. Requires Mg(2+) as cofactor.

It catalyses the reaction (2R)-2,3-dihydroxy-3-methylbutanoate = 3-methyl-2-oxobutanoate + H2O. The catalysed reaction is (2R,3R)-2,3-dihydroxy-3-methylpentanoate = (S)-3-methyl-2-oxopentanoate + H2O. Its pathway is amino-acid biosynthesis; L-isoleucine biosynthesis; L-isoleucine from 2-oxobutanoate: step 3/4. It functions in the pathway amino-acid biosynthesis; L-valine biosynthesis; L-valine from pyruvate: step 3/4. Its function is as follows. Functions in the biosynthesis of branched-chain amino acids. Catalyzes the dehydration of (2R,3R)-2,3-dihydroxy-3-methylpentanoate (2,3-dihydroxy-3-methylvalerate) into 2-oxo-3-methylpentanoate (2-oxo-3-methylvalerate) and of (2R)-2,3-dihydroxy-3-methylbutanoate (2,3-dihydroxyisovalerate) into 2-oxo-3-methylbutanoate (2-oxoisovalerate), the penultimate precursor to L-isoleucine and L-valine, respectively. This chain is Dihydroxy-acid dehydratase, found in Chlorobaculum tepidum (strain ATCC 49652 / DSM 12025 / NBRC 103806 / TLS) (Chlorobium tepidum).